The following is a 434-amino-acid chain: Methylenetetrahydrofolate--tRNA-(uracil-5-)-methyltransferase TrmFO (434 aa).

Residue 10 to 15 coordinates FAD; that stretch reads GAGLAG.

Belongs to the MnmG family. TrmFO subfamily. FAD serves as cofactor.

The protein resides in the cytoplasm. The catalysed reaction is uridine(54) in tRNA + (6R)-5,10-methylene-5,6,7,8-tetrahydrofolate + NADH + H(+) = 5-methyluridine(54) in tRNA + (6S)-5,6,7,8-tetrahydrofolate + NAD(+). It carries out the reaction uridine(54) in tRNA + (6R)-5,10-methylene-5,6,7,8-tetrahydrofolate + NADPH + H(+) = 5-methyluridine(54) in tRNA + (6S)-5,6,7,8-tetrahydrofolate + NADP(+). Functionally, catalyzes the folate-dependent formation of 5-methyl-uridine at position 54 (M-5-U54) in all tRNAs. The protein is Methylenetetrahydrofolate--tRNA-(uracil-5-)-methyltransferase TrmFO of Bacillus cereus (strain ATCC 14579 / DSM 31 / CCUG 7414 / JCM 2152 / NBRC 15305 / NCIMB 9373 / NCTC 2599 / NRRL B-3711).